We begin with the raw amino-acid sequence, 552 residues long: Sensor histidine kinase DpiB (552 aa).

At 1 to 21 (MLQLNENKQFAFFQRLAFPLR) the chain is on the cytoplasmic side. A helical membrane pass occupies residues 22 to 42 (IFLLILVFSIFVIAALAQYFT). Over 43–182 (ASFEDYLTLH…DSWRAEFLLP (140 aa)) the chain is Periplasmic. The helical transmembrane segment at 183–203 (MAGVFVVLLGILMLLSWFLAA) threads the bilayer. The Cytoplasmic segment spans residues 204–552 (HIRRQMMGME…NDSSINPIDR (349 aa)). A PAS domain is found at 222-292 (RQQEALFSSV…IDEKRQDVVA (71 aa)). A Histidine kinase domain is found at 344–541 (TLRHEHLNWM…LFSIYIPKVK (198 aa)). At His347 the chain carries Phosphohistidine; by autocatalysis.

In terms of processing, autophosphorylated.

Its subcellular location is the cell inner membrane. The enzyme catalyses ATP + protein L-histidine = ADP + protein N-phospho-L-histidine.. With respect to regulation, autophosphorylation is induced in vitro by dithiothreitol (DTT). In terms of biological role, member of the two-component regulatory system DpiA/DpiB, which is essential for expression of citrate-specific fermentation genes and genes involved in plasmid inheritance. Could be involved in response to both the presence of citrate and external redox conditions. Functions as a sensor kinase that phosphorylates DpiA in the presence of citrate. The sequence is that of Sensor histidine kinase DpiB (dpiB) from Escherichia coli (strain K12).